The chain runs to 305 residues: Acetaldehyde dehydrogenase (305 aa).

Cysteine 130 (acyl-thioester intermediate) is an active-site residue. Residues 161–169 (SVGPGTRKN) and asparagine 272 contribute to the NAD(+) site.

Belongs to the acetaldehyde dehydrogenase family.

It catalyses the reaction acetaldehyde + NAD(+) + CoA = acetyl-CoA + NADH + H(+). In Leptothrix cholodnii (strain ATCC 51168 / LMG 8142 / SP-6) (Leptothrix discophora (strain SP-6)), this protein is Acetaldehyde dehydrogenase.